The following is a 349-amino-acid chain: Peptide chain release factor 1 (349 aa).

Gln-233 is modified (N5-methylglutamine).

It belongs to the prokaryotic/mitochondrial release factor family. Methylated by PrmC. Methylation increases the termination efficiency of RF1.

The protein localises to the cytoplasm. Peptide chain release factor 1 directs the termination of translation in response to the peptide chain termination codons UAG and UAA. This is Peptide chain release factor 1 from Pelotomaculum thermopropionicum (strain DSM 13744 / JCM 10971 / SI).